Here is a 115-residue protein sequence, read N- to C-terminus: Mediator of RNA polymerase II transcription subunit 31 (115 aa).

It belongs to the Mediator complex subunit 31 family. In terms of assembly, component of the Mediator complex.

Its subcellular location is the nucleus. Functionally, component of the Mediator complex, a coactivator involved in the regulated transcription of nearly all RNA polymerase II-dependent genes. Mediator functions as a bridge to convey information from gene-specific regulatory proteins to the basal RNA polymerase II transcription machinery. Mediator is recruited to promoters by direct interactions with regulatory proteins and serves as a scaffold for the assembly of a functional preinitiation complex with RNA polymerase II and the general transcription factors. This is Mediator of RNA polymerase II transcription subunit 31 (SOH1) from Phaeosphaeria nodorum (strain SN15 / ATCC MYA-4574 / FGSC 10173) (Glume blotch fungus).